The sequence spans 367 residues: Probable butyrate kinase (367 aa).

Belongs to the acetokinase family.

It is found in the cytoplasm. It carries out the reaction butanoate + ATP = butanoyl phosphate + ADP. The chain is Probable butyrate kinase from Bacillus cytotoxicus (strain DSM 22905 / CIP 110041 / 391-98 / NVH 391-98).